The sequence spans 122 residues: Large ribosomal subunit protein uL14 (122 aa).

This sequence belongs to the universal ribosomal protein uL14 family. As to quaternary structure, part of the 50S ribosomal subunit. Forms a cluster with proteins L3 and L19. In the 70S ribosome, L14 and L19 interact and together make contacts with the 16S rRNA in bridges B5 and B8.

Binds to 23S rRNA. Forms part of two intersubunit bridges in the 70S ribosome. The chain is Large ribosomal subunit protein uL14 from Corynebacterium kroppenstedtii (strain DSM 44385 / JCM 11950 / CIP 105744 / CCUG 35717).